A 1115-amino-acid chain; its full sequence is Phytochrome E (1115 aa).

Positions 213 to 383 (DIGTLCDTVV…AFSLQLYMEL (171 aa)) constitute a GAF domain. Residue Cys318 coordinates phytochromobilin. Positions 598–669 (MALELVRLVE…ALMCRALQGE (72 aa)) constitute a PAS 1 domain. Residues 672–728 (RNVEVKLLKFGNHPTKEVVYLVVNACTSRDYKNDIIGVCFVGQDITPEKAVMDKFVR) enclose the PAC domain. One can recognise a PAS 2 domain in the interval 732-803 (DYEAIIQSLN…DALTKFMILL (72 aa)). The Histidine kinase domain occupies 880–1100 (YIQQQMKNPL…YFLIDLDFKT (221 aa)).

Belongs to the phytochrome family. As to quaternary structure, homodimer. Post-translationally, contains one covalently linked phytochromobilin chromophore.

In terms of biological role, regulatory photoreceptor which exists in two forms that are reversibly interconvertible by light: the Pr form that absorbs maximally in the red region of the spectrum and the Pfr form that absorbs maximally in the far-red region. Photoconversion of Pr to Pfr induces an array of morphogenic responses, whereas reconversion of Pfr to Pr cancels the induction of those responses. Pfr controls the expression of a number of nuclear genes including those encoding the small subunit of ribulose-bisphosphate carboxylase, chlorophyll A/B binding protein, protochlorophyllide reductase, rRNA, etc. It also controls the expression of its own gene(s) in a negative feedback fashion. The polypeptide is Phytochrome E (PHYE) (Ipomoea nil (Japanese morning glory)).